The following is a 130-amino-acid chain: Osteocrin (130 aa).

Residues 1 to 25 form the signal peptide; sequence MLDWRLASTHFILAMIVMLWGSGKA. The residue at position 129 (arginine 129) is an Arginine amide.

Belongs to the Osteocrin family. Interacts with NPR3. As to expression, expressed in skeletal muscle and to a much lesser extent in bone, brown adipose tissue, spleen and testis. Not expressed in neurons.

The protein localises to the secreted. Its function is as follows. Hormone that acts as a ligand for natriuretic peptide receptor NPR3/NPR-C and promotes bone growth and physical endurance in muscle. Acts as a regulator of osteoblast differentiation and bone growth by binding to natriuretic peptide receptor NPR3/NPR-C, thereby preventing binding between NPR3/NPR-C and natriuretic peptides, leading to increase cGMP production. Required to enhance physical endurance: induced following physical exercise in muscle and promotes cGMP production, probably by interacting with NPR3/NPR-C. May act as an autocrine and paracrine factor linked to glucose metabolism in skeletal muscle. The sequence is that of Osteocrin from Mus musculus (Mouse).